Reading from the N-terminus, the 434-residue chain is MPVSARAGIVVTGTEVLTGRVQDANGPWIADRLLELGVELAHITICGDRPHDIEAQLRFLADQGVDLIVTSGGLGPTADDMTVEVVARFCGRELVLDAEVEEKIANILKKLMARNPAIQSALDPGTFESLRAANRKQAMVPAGAQVLDPVGTAPGVVVPGKPAVIVLPGPPRELQPMWHTAIQTPAAQQAIAGRTVYRQEMLRMFGLPESGLAETLREAEAAVPGFGQLEITTCLRRGEIEMVTRYEPTAATAYAQLTKLLRDKHGDQLYSEDGSRVDDLVARLLAGRRIATAESCTAGLLAARLTDRPGSSDYVAGGVVAYSNEAKAELLGVDPALIEAHGAVSEPVAQAMAAGARQRFAADTAVAITGIAGPGGGTEEKPVGTVCFSVQVGPPGATARSDTRTMRLPGNRSDIRERSTTVAMHLLRRLLTDA.

Belongs to the CinA family.

This Mycolicibacterium paratuberculosis (strain ATCC BAA-968 / K-10) (Mycobacterium paratuberculosis) protein is CinA-like protein.